The sequence spans 284 residues: Diaminopimelate epimerase (284 aa).

Substrate-binding residues include asparagine 20, glutamine 53, and asparagine 73. Cysteine 82 (proton donor) is an active-site residue. Substrate-binding positions include glycine 83–asparagine 84, asparagine 167, asparagine 200, and glutamate 218–arginine 219. The active-site Proton acceptor is cysteine 227. Position 228 to 229 (glycine 228 to serine 229) interacts with substrate.

This sequence belongs to the diaminopimelate epimerase family. As to quaternary structure, homodimer.

Its subcellular location is the cytoplasm. The enzyme catalyses (2S,6S)-2,6-diaminopimelate = meso-2,6-diaminopimelate. Its pathway is amino-acid biosynthesis; L-lysine biosynthesis via DAP pathway; DL-2,6-diaminopimelate from LL-2,6-diaminopimelate: step 1/1. Functionally, catalyzes the stereoinversion of LL-2,6-diaminopimelate (L,L-DAP) to meso-diaminopimelate (meso-DAP), a precursor of L-lysine and an essential component of the bacterial peptidoglycan. The protein is Diaminopimelate epimerase of Xylella fastidiosa (strain M23).